An 845-amino-acid chain; its full sequence is Protein TSD2 (845 aa).

The disordered stretch occupies residues 193–283 (DVDSDSESDS…SASATRLTNA (91 aa)). 2 stretches are compositionally biased toward basic and acidic residues: residues 202–212 (SDSHSDSHSDS) and 230–242 (ARSHDERQRDGSG). The span at 243 to 272 (GKRKRGSHSPLSRRRQRHKQGQRHKPRHRS) shows a compositional bias: basic residues.

It belongs to the CDC45 family.

It is found in the nucleus. In terms of biological role, temperature-sensitive protein required for DNA synthesis. May be a transcription factor that regulates the level or influences the stability of DNA polymerases or auxiliary proteins. The chain is Protein TSD2 (TSD2) from Mycosarcoma maydis (Corn smut fungus).